We begin with the raw amino-acid sequence, 412 residues long: Aspartate aminotransferase, cytoplasmic (412 aa).

Ala2 carries the N-acetylalanine modification. L-aspartate contacts are provided by Gly38, Trp140, and Asn194. An N6-(pyridoxal phosphate)lysine modification is found at Lys258. Arg386 lines the L-aspartate pocket.

It belongs to the class-I pyridoxal-phosphate-dependent aminotransferase family. In terms of assembly, homodimer. It depends on pyridoxal 5'-phosphate as a cofactor.

The protein resides in the cytoplasm. It carries out the reaction L-aspartate + 2-oxoglutarate = oxaloacetate + L-glutamate. It catalyses the reaction L-cysteine + 2-oxoglutarate = 2-oxo-3-sulfanylpropanoate + L-glutamate. The catalysed reaction is (2S)-2-aminobutanoate + 2-oxoglutarate = 2-oxobutanoate + L-glutamate. The enzyme catalyses 3-sulfino-L-alanine + 2-oxoglutarate = 3-sulfinopyruvate + L-glutamate. Functionally, biosynthesis of L-glutamate from L-aspartate or L-cysteine. Important regulator of levels of glutamate, the major excitatory neurotransmitter of the vertebrate central nervous system. Acts as a scavenger of glutamate in brain neuroprotection. The aspartate aminotransferase activity is involved in hepatic glucose synthesis during development and in adipocyte glyceroneogenesis. Using L-cysteine as substrate, regulates levels of mercaptopyruvate, an important source of hydrogen sulfide. Mercaptopyruvate is converted into H(2)S via the action of 3-mercaptopyruvate sulfurtransferase (3MST). Hydrogen sulfide is an important synaptic modulator and neuroprotectant in the brain. The sequence is that of Aspartate aminotransferase, cytoplasmic from Gallus gallus (Chicken).